We begin with the raw amino-acid sequence, 97 residues long: MKAAALLLLAALLTFSLCRSAPDGSDARSAKAFISHRQRAEMVRRQKRHYAQDSGVAGAPPNPLEAQREVCELSPDCDELADQIGFQEAYRRFYGPV.

The first 20 residues, 1–20 (MKAAALLLLAALLTFSLCRS), serve as a signal peptide directing secretion. Residues 21–48 (APDGSDARSAKAFISHRQRAEMVRRQKR) constitute a propeptide that is removed on maturation. The Gla domain maps to 49 to 95 (HYAQDSGVAGAPPNPLEAQREVCELSPDCDELADQIGFQEAYRRFYG). Positions 65, 69, 72, and 78 each coordinate Ca(2+). A 4-carboxyglutamate mark is found at Glu65, Glu69, and Glu72. An intrachain disulfide couples Cys71 to Cys77.

Belongs to the osteocalcin/matrix Gla protein family. Post-translationally, gamma-carboxyglutamate residues are formed by vitamin K dependent carboxylation by GGCX. These residues are essential for the binding of calcium.

Its subcellular location is the secreted. The carboxylated form is one of the main organic components of the bone matrix, which constitutes 1-2% of the total bone protein. The carboxylated form binds strongly to apatite and calcium. The protein is Osteocalcin (BGLAP) of Gallus gallus (Chicken).